Here is a 444-residue protein sequence, read N- to C-terminus: Phosphoglucosamine mutase (444 aa).

The active-site Phosphoserine intermediate is the Ser104. Mg(2+) is bound by residues Ser104, Asp243, Asp245, and Asp247. Ser104 bears the Phosphoserine mark.

The protein belongs to the phosphohexose mutase family. Requires Mg(2+) as cofactor. Activated by phosphorylation.

It carries out the reaction alpha-D-glucosamine 1-phosphate = D-glucosamine 6-phosphate. In terms of biological role, catalyzes the conversion of glucosamine-6-phosphate to glucosamine-1-phosphate. In Neisseria meningitidis serogroup B (strain ATCC BAA-335 / MC58), this protein is Phosphoglucosamine mutase.